The primary structure comprises 691 residues: Glycine--tRNA ligase beta subunit (691 aa).

It belongs to the class-II aminoacyl-tRNA synthetase family. Tetramer of two alpha and two beta subunits.

It is found in the cytoplasm. It catalyses the reaction tRNA(Gly) + glycine + ATP = glycyl-tRNA(Gly) + AMP + diphosphate. The sequence is that of Glycine--tRNA ligase beta subunit from Limosilactobacillus reuteri (strain DSM 20016) (Lactobacillus reuteri).